A 263-amino-acid polypeptide reads, in one-letter code: Acetyl-coenzyme A carboxylase carboxyl transferase subunit beta (263 aa).

Residues 1-263 (MDCPSCKVSY…LKETPKKKKA (263 aa)) form the CoA carboxyltransferase N-terminal domain. Residues Cys-3, Cys-6, Cys-22, and Cys-25 each contribute to the Zn(2+) site. The C4-type zinc finger occupies 3-25 (CPSCKVSYDEEVFTDNLMVCPHC).

Belongs to the AccD/PCCB family. As to quaternary structure, acetyl-CoA carboxylase is a heterohexamer composed of biotin carboxyl carrier protein (AccB), biotin carboxylase (AccC) and two subunits each of ACCase subunit alpha (AccA) and ACCase subunit beta (AccD). Requires Zn(2+) as cofactor.

The protein resides in the cytoplasm. The enzyme catalyses N(6)-carboxybiotinyl-L-lysyl-[protein] + acetyl-CoA = N(6)-biotinyl-L-lysyl-[protein] + malonyl-CoA. It functions in the pathway lipid metabolism; malonyl-CoA biosynthesis; malonyl-CoA from acetyl-CoA: step 1/1. In terms of biological role, component of the acetyl coenzyme A carboxylase (ACC) complex. Biotin carboxylase (BC) catalyzes the carboxylation of biotin on its carrier protein (BCCP) and then the CO(2) group is transferred by the transcarboxylase to acetyl-CoA to form malonyl-CoA. This is Acetyl-coenzyme A carboxylase carboxyl transferase subunit beta from Treponema denticola (strain ATCC 35405 / DSM 14222 / CIP 103919 / JCM 8153 / KCTC 15104).